The following is a 279-amino-acid chain: Shikimate dehydrogenase (NADP(+)) (279 aa).

Residues 21–23 (SRS) and Thr68 each bind shikimate. Residue Lys72 is the Proton acceptor of the active site. Residue Asp83 participates in NADP(+) binding. Asn92 and Asp107 together coordinate shikimate. Residues 132-136 (GAGGA), 156-161 (NRTVER), and Leu221 contribute to the NADP(+) site. Tyr223 contacts shikimate. Gly244 contributes to the NADP(+) binding site.

Belongs to the shikimate dehydrogenase family. As to quaternary structure, homodimer.

It catalyses the reaction shikimate + NADP(+) = 3-dehydroshikimate + NADPH + H(+). Its pathway is metabolic intermediate biosynthesis; chorismate biosynthesis; chorismate from D-erythrose 4-phosphate and phosphoenolpyruvate: step 4/7. In terms of biological role, involved in the biosynthesis of the chorismate, which leads to the biosynthesis of aromatic amino acids. Catalyzes the reversible NADPH linked reduction of 3-dehydroshikimate (DHSA) to yield shikimate (SA). This chain is Shikimate dehydrogenase (NADP(+)), found in Nitrobacter winogradskyi (strain ATCC 25391 / DSM 10237 / CIP 104748 / NCIMB 11846 / Nb-255).